We begin with the raw amino-acid sequence, 473 residues long: Photosystem II CP43 reaction center protein (473 aa).

Positions 1–14 are excised as a propeptide; that stretch reads MKTLYSLRRFYPVE. Position 15 is an N-acetylthreonine (T15). A Phosphothreonine modification is found at T15. The next 5 membrane-spanning stretches (helical) occupy residues 69–93, 134–155, 178–200, 255–275, and 291–312; these read LFEV…PHLA, LLGP…KDRN, KALY…RKIT, KPFA…LSYS, and WFNN…ASQA. E367 contributes to the [CaMn4O5] cluster binding site. A helical membrane pass occupies residues 447-471; that stretch reads RARAAAAGFEKGIDRDLEPVLSMTP.

The protein belongs to the PsbB/PsbC family. PsbC subfamily. As to quaternary structure, PSII is composed of 1 copy each of membrane proteins PsbA, PsbB, PsbC, PsbD, PsbE, PsbF, PsbH, PsbI, PsbJ, PsbK, PsbL, PsbM, PsbT, PsbX, PsbY, PsbZ, Psb30/Ycf12, at least 3 peripheral proteins of the oxygen-evolving complex and a large number of cofactors. It forms dimeric complexes. Binds multiple chlorophylls and provides some of the ligands for the Ca-4Mn-5O cluster of the oxygen-evolving complex. It may also provide a ligand for a Cl- that is required for oxygen evolution. PSII binds additional chlorophylls, carotenoids and specific lipids. serves as cofactor.

It localises to the plastid. The protein resides in the chloroplast thylakoid membrane. In terms of biological role, one of the components of the core complex of photosystem II (PSII). It binds chlorophyll and helps catalyze the primary light-induced photochemical processes of PSII. PSII is a light-driven water:plastoquinone oxidoreductase, using light energy to abstract electrons from H(2)O, generating O(2) and a proton gradient subsequently used for ATP formation. This Dioscorea elephantipes (Elephant's foot yam) protein is Photosystem II CP43 reaction center protein.